A 150-amino-acid chain; its full sequence is Nucleoside diphosphate kinase (150 aa).

Residues Lys10, Phe58, Arg86, Thr92, Arg103, and Asn113 each coordinate ATP. Catalysis depends on His116, which acts as the Pros-phosphohistidine intermediate.

This sequence belongs to the NDK family. Mg(2+) is required as a cofactor.

Its subcellular location is the cytoplasm. The enzyme catalyses a 2'-deoxyribonucleoside 5'-diphosphate + ATP = a 2'-deoxyribonucleoside 5'-triphosphate + ADP. It catalyses the reaction a ribonucleoside 5'-diphosphate + ATP = a ribonucleoside 5'-triphosphate + ADP. In terms of biological role, major role in the synthesis of nucleoside triphosphates other than ATP. The ATP gamma phosphate is transferred to the NDP beta phosphate via a ping-pong mechanism, using a phosphorylated active-site intermediate. This chain is Nucleoside diphosphate kinase, found in Methanobrevibacter smithii (strain ATCC 35061 / DSM 861 / OCM 144 / PS).